Reading from the N-terminus, the 669-residue chain is MGSNSSKISDLPKNEYLKKLSGPESISENDPFWNQLFSFSFPAPTSSSELKLLEEATISVCKSLVENNPRTGNLAALTKVFLSRTRELRLSAECQNHIFIWQTHNALFIICCLLKVFIRELSEEELQLHFTYEEKSPGSYSSDSEDLLEELLCSLVQLITDTPLLDITYEIAVEAISAMVVFLSCQLFHKEVLRQSISHKYLMQGPCLPYTSKLVKTLLYNFIRQEKPPPPGTHVFPQQSDGGGLLYGLASGVATGLWTVFTLGGAGSKAAASPELTSPLANQSLLLLLVLVNLTDAPDIPNPYRQAVSSFKNTQDSSPFPSSIPHTFQINFNSLYTALCEQQTSDQATLLLYTLLHQNSNVRTYVLARTDMENLVLPILEILYHVEERNSHHVYMALIILLILTEDDGFNRSIHEVILRNITWYSERVLTEISLGSLLILVVIRTIQYNMTRTRDKYLHTNCLAALANMSAQFRSLHQYAAQRIISLFSLLSKKHNKVLEQATQSLRGPLSSSDVPLPDYAQDLSVIEEVIRMMLEIINSCLTNSLHHNPNLVYALLYKRDLFEQFRTHPSFQDIMQNIDLVISFFSSRLLQAGAELSVERVLEIIKQGVVALPKDRLKKFPELKFKYVEEEQPEEFFIPYVWSLVYNSAVGLYWNPQDIQLFAMDSD.

The N-myristoyl glycine moiety is linked to residue Gly-2.

It belongs to the dymeclin family. In terms of assembly, interacts with GOLM1 and PPIB. Post-translationally, myristoylated in vitro; myristoylation is not essential for protein targeting to Golgi compartment.

It is found in the cytoplasm. The protein localises to the golgi apparatus. Its subcellular location is the membrane. Necessary for correct organization of Golgi apparatus. Involved in bone development. The sequence is that of Dymeclin (Dym) from Mus musculus (Mouse).